Here is a 350-residue protein sequence, read N- to C-terminus: Putative F-box protein At1g23770 (350 aa).

Residues 1-15 (MDTGFADSNNDSSPG) are compositionally biased toward polar residues. The tract at residues 1–29 (MDTGFADSNNDSSPGEGSKRGNSGIEGPV) is disordered. One can recognise an F-box domain in the interval 206–252 (PPCLMLLPTELKLKILELLPGVSIGYMACVCTEMRYLASDNDLWEHK).

The polypeptide is Putative F-box protein At1g23770 (Arabidopsis thaliana (Mouse-ear cress)).